A 322-amino-acid polypeptide reads, in one-letter code: DNA repair and recombination protein RadA (322 aa).

105–112 serves as a coordination point for ATP; sequence GMYGSGKT.

It belongs to the eukaryotic RecA-like protein family.

Functionally, involved in DNA repair and in homologous recombination. Binds and assemble on single-stranded DNA to form a nucleoprotein filament. Hydrolyzes ATP in a ssDNA-dependent manner and promotes DNA strand exchange between homologous DNA molecules. This Methanococcus maripaludis (strain C5 / ATCC BAA-1333) protein is DNA repair and recombination protein RadA.